Consider the following 98-residue polypeptide: Co-chaperonin GroES (98 aa).

Belongs to the GroES chaperonin family. In terms of assembly, heptamer of 7 subunits arranged in a ring. Interacts with the chaperonin GroEL.

It is found in the cytoplasm. Its function is as follows. Together with the chaperonin GroEL, plays an essential role in assisting protein folding. The GroEL-GroES system forms a nano-cage that allows encapsulation of the non-native substrate proteins and provides a physical environment optimized to promote and accelerate protein folding. GroES binds to the apical surface of the GroEL ring, thereby capping the opening of the GroEL channel. The chain is Co-chaperonin GroES from Brucella abortus (strain S19).